The following is a 536-amino-acid chain: Xylulose kinase (536 aa).

Substrate contacts are provided by His99, Arg170, Asp280, and Asn281. ATP contacts are provided by residues Trp355, Gly441–Ala442, and Asn445.

This sequence belongs to the FGGY kinase family. As to quaternary structure, monomer.

It carries out the reaction D-xylulose + ATP = D-xylulose 5-phosphate + ADP + H(+). In terms of biological role, phosphorylates D-xylulose to produce D-xylulose 5-phosphate, a molecule that may play an important role in the regulation of glucose metabolism and lipogenesis. The polypeptide is Xylulose kinase (XYLB) (Homo sapiens (Human)).